The sequence spans 216 residues: MTDHKPSKSLPKATAKRLPQYYRLFKSLVEENVTRTNSQLISEKIGVDAATIRRDFSLFGELGRRGYGYETKVLRDFFGELLGQDQETHIALIGVGNLGRALLHYQFQDRNKMRITQAYDISGNPLVGTQTDDGIPIYNISDLEKNVKKSDIKTAILSVRKENAQEVVDTLVKAGIKGFLNFAPIRLKVPSDVVVQSIDLTKELQTLLFFMNDNKQ.

The H-T-H motif DNA-binding region spans 20–59 (QYYRLFKSLVEENVTRTNSQLISEKIGVDAATIRRDFSLF). 94-99 (GVGNLG) contributes to the NAD(+) binding site.

Belongs to the transcriptional regulatory Rex family. As to quaternary structure, homodimer.

The protein localises to the cytoplasm. Functionally, modulates transcription in response to changes in cellular NADH/NAD(+) redox state. The protein is Redox-sensing transcriptional repressor Rex of Lactococcus lactis subsp. cremoris (strain SK11).